Here is a 239-residue protein sequence, read N- to C-terminus: ATP synthase subunit a, chloroplastic (239 aa).

The next 5 membrane-spanning stretches (helical) occupy residues 30–50, 87–107, 126–146, 191–211, and 212–232; these read VLLV…LGTF, VPFI…GALV, INTT…AGLS, LVVA…VMVL, and GLFA…SYIG.

This sequence belongs to the ATPase A chain family. F-type ATPases have 2 components, CF(1) - the catalytic core - and CF(0) - the membrane proton channel. CF(1) has five subunits: alpha(3), beta(3), gamma(1), delta(1), epsilon(1). CF(0) has four main subunits: a, b, b' and c.

It is found in the plastid. The protein resides in the chloroplast thylakoid membrane. In terms of biological role, key component of the proton channel; it plays a direct role in the translocation of protons across the membrane. This Cyanidium caldarium (Red alga) protein is ATP synthase subunit a, chloroplastic.